A 422-amino-acid chain; its full sequence is Glutamyl-tRNA reductase (422 aa).

Residues 49–52 (TCNR), Ser-107, 112–114 (EPQ), and Gln-118 contribute to the substrate site. Cys-50 functions as the Nucleophile in the catalytic mechanism. 187 to 192 (GAGETI) is an NADP(+) binding site.

It belongs to the glutamyl-tRNA reductase family. Homodimer.

It catalyses the reaction (S)-4-amino-5-oxopentanoate + tRNA(Glu) + NADP(+) = L-glutamyl-tRNA(Glu) + NADPH + H(+). The protein operates within porphyrin-containing compound metabolism; protoporphyrin-IX biosynthesis; 5-aminolevulinate from L-glutamyl-tRNA(Glu): step 1/2. Its function is as follows. Catalyzes the NADPH-dependent reduction of glutamyl-tRNA(Glu) to glutamate 1-semialdehyde (GSA). This chain is Glutamyl-tRNA reductase, found in Pseudomonas paraeruginosa (strain DSM 24068 / PA7) (Pseudomonas aeruginosa (strain PA7)).